The primary structure comprises 473 residues: Cysteine--tRNA ligase (473 aa).

C28 lines the Zn(2+) pocket. The short motif at 30-40 is the 'HIGH' region element; sequence PTVYNMPHIGN. Positions 213, 238, and 242 each coordinate Zn(2+). The short motif at 270 to 274 is the 'KMSKS' region element; sequence KMSKS. An ATP-binding site is contributed by K273.

Belongs to the class-I aminoacyl-tRNA synthetase family. Zn(2+) is required as a cofactor.

The protein resides in the cytoplasm. It catalyses the reaction tRNA(Cys) + L-cysteine + ATP = L-cysteinyl-tRNA(Cys) + AMP + diphosphate. The protein is Cysteine--tRNA ligase of Methanosarcina mazei (strain ATCC BAA-159 / DSM 3647 / Goe1 / Go1 / JCM 11833 / OCM 88) (Methanosarcina frisia).